The chain runs to 328 residues: Acyl-CoA wax alcohol acyltransferase 1 (328 aa).

Transmembrane regions (helical) follow at residues S12–L32 and I34–L53.

This sequence belongs to the diacylglycerol acyltransferase family.

It is found in the endoplasmic reticulum membrane. It carries out the reaction a long chain fatty alcohol + a fatty acyl-CoA = a wax ester + CoA. The enzyme catalyses 1,2-di-(9Z-octadecenoyl)-sn-glycerol + (9Z)-octadecenoyl-CoA = 1,2,3-tri-(9Z-octadecenoyl)-glycerol + CoA. It catalyses the reaction hexadecan-1-ol + (9Z)-octadecenoyl-CoA = hexadecanyl (9Z)-octadecenoate + CoA. The catalysed reaction is decan-1-ol + (9Z)-octadecenoyl-CoA = 1-O-decyl-(9Z)-octadecenoate + CoA. It carries out the reaction (9Z)-hexadecen-1-ol + (9Z)-octadecenoyl-CoA = 1-O-(9Z)-hexadecenyl (9Z)-octadecenoate + CoA. The enzyme catalyses octadecan-1-ol + (9Z)-octadecenoyl-CoA = 1-O-octadecyl (9Z)-octadecenoate + CoA. It catalyses the reaction (9Z)-octadecen-1-ol + (9Z)-octadecenoyl-CoA = 1-O-(9Z)-octadecenyl (9Z)-octadecenoate + CoA. The catalysed reaction is hexadecan-1-ol + hexadecanoyl-CoA = hexadecanyl hexadecanoate + CoA. It carries out the reaction hexadecan-1-ol + (9Z)-hexadecenoyl-CoA = 1-O-hexadecyl (9Z)-hexadecenoate + CoA. The enzyme catalyses hexadecan-1-ol + octadecanoyl-CoA = hexadecanyl octadecanoate + CoA. It catalyses the reaction eicosan-1-ol + (9Z)-octadecenoyl-CoA = 1-O-eicosanyl (9Z)-octadecenoate + CoA. Functionally, acyltransferase that catalyzes the formation of ester bonds between fatty alcohols and fatty acyl-CoAs to form wax monoesters. Shows a strong preference for decyl alcohol (C10), with less activity towards C16 and C18 alcohols. Shows a strong preference for saturated acyl-CoAs. The sequence is that of Acyl-CoA wax alcohol acyltransferase 1 (Awat1) from Mus musculus (Mouse).